Consider the following 146-residue polypeptide: Hemoglobin subunit beta (146 aa).

Residues 2-146 (HWSAEEKQLI…VAHALARKYH (145 aa)) form the Globin domain. Residues H63 and H92 each coordinate heme b.

It belongs to the globin family. As to quaternary structure, heterotetramer of two alpha chains and two beta chains. Red blood cells.

In terms of biological role, involved in oxygen transport from the lung to the various peripheral tissues. The polypeptide is Hemoglobin subunit beta (HBB) (Anser indicus (Bar-headed goose)).